We begin with the raw amino-acid sequence, 688 residues long: Methionine--tRNA ligase (688 aa).

Residues 15-25 (PYANGPIHLGH) carry the 'HIGH' region motif. C146, C149, C159, and C162 together coordinate Zn(2+). The 'KMSKS' region motif lies at 332–336 (KMSKS). K335 is a binding site for ATP. The tract at residues 552-576 (AEAPKKADSKKATDTPVDTRPPLES) is disordered. Over residues 554–564 (APKKADSKKAT) the composition is skewed to basic and acidic residues. Positions 587–688 (DFAKIDLRIA…EGAQPGMRVK (102 aa)) constitute a tRNA-binding domain.

The protein belongs to the class-I aminoacyl-tRNA synthetase family. MetG type 1 subfamily. As to quaternary structure, homodimer. The cofactor is Zn(2+).

Its subcellular location is the cytoplasm. It catalyses the reaction tRNA(Met) + L-methionine + ATP = L-methionyl-tRNA(Met) + AMP + diphosphate. Its function is as follows. Is required not only for elongation of protein synthesis but also for the initiation of all mRNA translation through initiator tRNA(fMet) aminoacylation. The protein is Methionine--tRNA ligase of Shewanella woodyi (strain ATCC 51908 / MS32).